The chain runs to 290 residues: Formamidopyrimidine-DNA glycosylase (290 aa).

Pro2 serves as the catalytic Schiff-base intermediate with DNA. The active-site Proton donor is Glu3. Lys58 serves as the catalytic Proton donor; for beta-elimination activity. His97, Arg122, and Lys165 together coordinate DNA. The segment at 250–290 (KVYGREGEPCPGCDCDPVRTGGIARIVQSGRSTFYCPRHQR) adopts an FPG-type; atypical zinc-finger fold. Catalysis depends on Arg280, which acts as the Proton donor; for delta-elimination activity.

It belongs to the FPG family. In terms of assembly, monomer. Requires Zn(2+) as cofactor.

The enzyme catalyses Hydrolysis of DNA containing ring-opened 7-methylguanine residues, releasing 2,6-diamino-4-hydroxy-5-(N-methyl)formamidopyrimidine.. The catalysed reaction is 2'-deoxyribonucleotide-(2'-deoxyribose 5'-phosphate)-2'-deoxyribonucleotide-DNA = a 3'-end 2'-deoxyribonucleotide-(2,3-dehydro-2,3-deoxyribose 5'-phosphate)-DNA + a 5'-end 5'-phospho-2'-deoxyribonucleoside-DNA + H(+). Its function is as follows. Involved in base excision repair of DNA damaged by oxidation or by mutagenic agents. Acts as a DNA glycosylase that recognizes and removes damaged bases. Has a preference for oxidized purines, such as 7,8-dihydro-8-oxoguanine (8-oxoG). Has AP (apurinic/apyrimidinic) lyase activity and introduces nicks in the DNA strand. Cleaves the DNA backbone by beta-delta elimination to generate a single-strand break at the site of the removed base with both 3'- and 5'-phosphates. This chain is Formamidopyrimidine-DNA glycosylase, found in Rhodospirillum centenum (strain ATCC 51521 / SW).